The following is a 314-amino-acid chain: Homoserine O-succinyltransferase (314 aa).

The Acyl-thioester intermediate role is filled by C142. Residues K163 and S192 each coordinate substrate. The active-site Proton acceptor is H235. E237 is a catalytic residue. A substrate-binding site is contributed by R249.

Belongs to the MetA family.

It is found in the cytoplasm. It carries out the reaction L-homoserine + succinyl-CoA = O-succinyl-L-homoserine + CoA. Its pathway is amino-acid biosynthesis; L-methionine biosynthesis via de novo pathway; O-succinyl-L-homoserine from L-homoserine: step 1/1. In terms of biological role, transfers a succinyl group from succinyl-CoA to L-homoserine, forming succinyl-L-homoserine. In Shewanella woodyi (strain ATCC 51908 / MS32), this protein is Homoserine O-succinyltransferase.